A 637-amino-acid polypeptide reads, in one-letter code: tRNA 5-methylaminomethyl-2-thiouridine biosynthesis bifunctional protein MnmC (637 aa).

The segment at 1–232 is tRNA (mnm(5)s(2)U34)-methyltransferase; that stretch reads MPERIEWLED…KRDNLQGEFN (232 aa). The segment at 255–637 is FAD-dependent cmnm(5)s(2)U34 oxidoreductase; sequence IGAGLAGAAV…YGEAKLVSED (383 aa).

It in the N-terminal section; belongs to the methyltransferase superfamily. tRNA (mnm(5)s(2)U34)-methyltransferase family. The protein in the C-terminal section; belongs to the DAO family. FAD serves as cofactor.

The protein localises to the cytoplasm. It catalyses the reaction 5-aminomethyl-2-thiouridine(34) in tRNA + S-adenosyl-L-methionine = 5-methylaminomethyl-2-thiouridine(34) in tRNA + S-adenosyl-L-homocysteine + H(+). In terms of biological role, catalyzes the last two steps in the biosynthesis of 5-methylaminomethyl-2-thiouridine (mnm(5)s(2)U) at the wobble position (U34) in tRNA. Catalyzes the FAD-dependent demodification of cmnm(5)s(2)U34 to nm(5)s(2)U34, followed by the transfer of a methyl group from S-adenosyl-L-methionine to nm(5)s(2)U34, to form mnm(5)s(2)U34. The polypeptide is tRNA 5-methylaminomethyl-2-thiouridine biosynthesis bifunctional protein MnmC (Polaromonas sp. (strain JS666 / ATCC BAA-500)).